The following is a 469-amino-acid chain: UDP-N-acetylmuramate--L-alanine ligase (469 aa).

ATP is bound at residue 113 to 119 (GTHGKTT).

Belongs to the MurCDEF family.

It is found in the cytoplasm. It carries out the reaction UDP-N-acetyl-alpha-D-muramate + L-alanine + ATP = UDP-N-acetyl-alpha-D-muramoyl-L-alanine + ADP + phosphate + H(+). It functions in the pathway cell wall biogenesis; peptidoglycan biosynthesis. In terms of biological role, cell wall formation. The polypeptide is UDP-N-acetylmuramate--L-alanine ligase (Neisseria meningitidis serogroup C / serotype 2a (strain ATCC 700532 / DSM 15464 / FAM18)).